Consider the following 171-residue polypeptide: 3-hydroxydecanoyl-[acyl-carrier-protein] dehydratase (171 aa).

H71 is an active-site residue.

It belongs to the thioester dehydratase family. FabA subfamily. In terms of assembly, homodimer.

The protein localises to the cytoplasm. The catalysed reaction is a (3R)-hydroxyacyl-[ACP] = a (2E)-enoyl-[ACP] + H2O. It catalyses the reaction (3R)-hydroxydecanoyl-[ACP] = (2E)-decenoyl-[ACP] + H2O. It carries out the reaction (2E)-decenoyl-[ACP] = (3Z)-decenoyl-[ACP]. It participates in lipid metabolism; fatty acid biosynthesis. Its function is as follows. Necessary for the introduction of cis unsaturation into fatty acids. Catalyzes the dehydration of (3R)-3-hydroxydecanoyl-ACP to E-(2)-decenoyl-ACP and then its isomerization to Z-(3)-decenoyl-ACP. Can catalyze the dehydratase reaction for beta-hydroxyacyl-ACPs with saturated chain lengths up to 16:0, being most active on intermediate chain length. In Agrobacterium fabrum (strain C58 / ATCC 33970) (Agrobacterium tumefaciens (strain C58)), this protein is 3-hydroxydecanoyl-[acyl-carrier-protein] dehydratase.